A 318-amino-acid chain; its full sequence is Acetyl-coenzyme A carboxylase carboxyl transferase subunit alpha (318 aa).

Residues 38-292 form the CoA carboxyltransferase C-terminal domain; the sequence is KLEKRLAKLE…NKTITKSLHA (255 aa).

This sequence belongs to the AccA family. Acetyl-CoA carboxylase is a heterohexamer composed of biotin carboxyl carrier protein (AccB), biotin carboxylase (AccC) and two subunits each of ACCase subunit alpha (AccA) and ACCase subunit beta (AccD).

It is found in the cytoplasm. The catalysed reaction is N(6)-carboxybiotinyl-L-lysyl-[protein] + acetyl-CoA = N(6)-biotinyl-L-lysyl-[protein] + malonyl-CoA. The protein operates within lipid metabolism; malonyl-CoA biosynthesis; malonyl-CoA from acetyl-CoA: step 1/1. In terms of biological role, component of the acetyl coenzyme A carboxylase (ACC) complex. First, biotin carboxylase catalyzes the carboxylation of biotin on its carrier protein (BCCP) and then the CO(2) group is transferred by the carboxyltransferase to acetyl-CoA to form malonyl-CoA. The sequence is that of Acetyl-coenzyme A carboxylase carboxyl transferase subunit alpha from Listeria monocytogenes serovar 1/2a (strain ATCC BAA-679 / EGD-e).